Reading from the N-terminus, the 85-residue chain is UPF0297 protein lhv_0439 (85 aa).

The protein belongs to the UPF0297 family.

This Lactobacillus helveticus (strain DPC 4571) protein is UPF0297 protein lhv_0439.